A 115-amino-acid chain; its full sequence is Ribonuclease P protein component (115 aa).

This sequence belongs to the RnpA family. Consists of a catalytic RNA component (M1 or rnpB) and a protein subunit.

The catalysed reaction is Endonucleolytic cleavage of RNA, removing 5'-extranucleotides from tRNA precursor.. Functionally, RNaseP catalyzes the removal of the 5'-leader sequence from pre-tRNA to produce the mature 5'-terminus. It can also cleave other RNA substrates such as 4.5S RNA. The protein component plays an auxiliary but essential role in vivo by binding to the 5'-leader sequence and broadening the substrate specificity of the ribozyme. The chain is Ribonuclease P protein component from Bacillus cereus (strain AH187).